The chain runs to 463 residues: L-seryl-tRNA(Sec) selenium transferase (463 aa).

Lys-295 carries the N6-(pyridoxal phosphate)lysine modification.

The protein belongs to the SelA family. As to quaternary structure, homodecamer; pentamer of dimers. Binds only one seryl-tRNA(Sec) per dimer. Pyridoxal 5'-phosphate is required as a cofactor.

It localises to the cytoplasm. The catalysed reaction is L-seryl-tRNA(Sec) + selenophosphate + H(+) = L-selenocysteinyl-tRNA(Sec) + phosphate. The protein operates within aminoacyl-tRNA biosynthesis; selenocysteinyl-tRNA(Sec) biosynthesis; selenocysteinyl-tRNA(Sec) from L-seryl-tRNA(Sec) (bacterial route): step 1/1. Its function is as follows. Converts seryl-tRNA(Sec) to selenocysteinyl-tRNA(Sec) required for selenoprotein biosynthesis. This chain is L-seryl-tRNA(Sec) selenium transferase, found in Salmonella enteritidis PT4 (strain P125109).